Consider the following 266-residue polypeptide: MPSYLITGGSRGLGYAWLKHLSSNPQNTVIGLVRDKSSPHSHPLADRLTNVHHVCADITDPKALQTAAEQVRAITGGGLDVLINNAAILTPTSAFTPITDLSPGVLERDILQSCRTNVVGVAHTVNAFLPLIRKGRAKKVITISSLLADPDLVRNFALDNAMPYAISKAAANLLMAKYHASLGATEGILFMAISPGAVSKPDTAPSEGEAEGRRRMAAKLQAYAPHFSRPMTMEESVRRQLEVIENATVELHGGAFVSHLGNKQWL.

Positions 13, 57, and 85 each coordinate NADP(+). Catalysis depends on proton donor residues Ser145 and Tyr164. Positions 164, 168, and 198 each coordinate NADP(+). The Lowers pKa of active site Tyr role is filled by Lys168.

This sequence belongs to the short-chain dehydrogenases/reductases (SDR) family.

It functions in the pathway secondary metabolite biosynthesis. Functionally, short-chain dehydrogenase/reductase; part of the gene cluster that mediates the biosynthesis of the tetrahydroxanthone dimer secalonic acid D. The pathway begins with the synthesis of atrochrysone thioester by the polyketide synthase AacuL. The atrochrysone carboxyl ACP thioesterase AacuM then breaks the thioester bond and releases the atrochrysone carboxylic acid from AacuL. Atrochrysone carboxylic acid is decarboxylated by the decarboxylase AacuI, and oxidized by the anthrone oxygenase AacuG to yield emodin. Emodin is then reduced to emodin hydroquinone by a yet unidentified oxidoreductase. A-ring reduction by the short chain dehydrogenase AacuN, dehydration by the scytalone dehydratase-like protein AacuK and probable spontaneous re-oxidation, results in overall deoxygenation to chrysophanol. Baeyer-Villiger oxidation by the Baeyer-Villiger monooxygenase (BVMO) AacuH then yields monodictyphenone. Monodictyphenone is transformed into compounds with the tetrahydroxanthone skeleton via methylesterification by the methyltransferase AacuQ, followed by the action of the flavin-dependent monooxygenase AacuC, the isomerase AacuP, and the short chain dehydrogenase/reductase AacuF or AacuD. AacuF and AacuD should accept the same compound as a substrate but perform the ketoreduction with a different stereoselectivity, thus yielding blennolides B and A, respectively. In the final step of the biosynthesis, the cytochrome P450 monooxygenase AacuE accepts blennolide B and/or blennolide A to conduct the dimerization reaction to furnish the tetrahydroxanthone dimers, secalonic acids D, B, and F. The polypeptide is Short-chain dehydrogenase/reductase AacuF (Aspergillus aculeatus (strain ATCC 16872 / CBS 172.66 / WB 5094)).